Here is a 189-residue protein sequence, read N- to C-terminus: Elongation factor P (189 aa).

It belongs to the elongation factor P family.

Its subcellular location is the cytoplasm. The protein operates within protein biosynthesis; polypeptide chain elongation. Involved in peptide bond synthesis. Stimulates efficient translation and peptide-bond synthesis on native or reconstituted 70S ribosomes in vitro. Probably functions indirectly by altering the affinity of the ribosome for aminoacyl-tRNA, thus increasing their reactivity as acceptors for peptidyl transferase. This chain is Elongation factor P, found in Ehrlichia chaffeensis (strain ATCC CRL-10679 / Arkansas).